A 1023-amino-acid chain; its full sequence is MDEMSCGGGGGGARWKRARVAGMGEGKAGGGGGAAFLGLERVGMVVRMLPVPEKVSARARVVRGSLVAHFRGWRVVRETWWWVLLLWILAGSLGSFYLFLFMNAQSLDKRRDSLASMCDERARMLQDQFNVSMNHLQALAILVSTFHHSKTPSAIDQMTFARYAERTAFERPLTSGVAYAVRVTHGEREQFERQQGWAIKKMYSSSNKKQSSPGPGPGDAAVAEIREPAEEYAPVIFAQDAYKHVISFDMLSGNEDRDNILRARKSGKGVLTAPFKLLNNRLGVILTYTVYKYELPAYARPHERIQAAIGYLGGIFDIQALVEKLLKQLASQESIMVNVYDTTNESPISMYGDDTGSGMCHVSVLNFGDPSRKHEMHCRFEKKPPWPWLAITSSFGTLVIALLTGHIFQATVHRIAKVEDDFHKMSELKKRAEDADVAKSQFLATVSHEIRTPMNGVLGMLQMLMDTDLDTTQQDYVRTAQASGKALVSLINEVLDQAKIESGKLELETVPFDLRTVCDDILSLFCGKAQEKGLELAVYVSDQVPQILIGDPGRIRQIITNLVGNSIKFTERGHIYLTVHVVEEVMSCLEVETGIQNTNTLSGYPVANRRRSWESIRLFNRELHSSEKSFAPIASDSISLVISVEDTGVGIPFEAQSRVFTPFMQVGPSIARIHGGTGIGLSISKCLVGLMKGEIGFASKPHVGSTFTFTAVLMRAHCKGNDIKSSEFKGINALVVDHRPVRAKVTKYHLQRLGVKTELTAELNQFISKLNSGSLTAKLVLIDKETWLKESHCTPLLVNKLRNNDKPDSPKLFLLGSSASSPKGGSDTSREHNLNVIMKPLRASMLQVSLRRALGGVDKVHCRNGVVGNSTLGSLLHKKQIIVVDDNIVNLKVAAGALKKYGAEVTCADSGKKAITLLKPPHNFDACFMDIQMPEMDGFEATRRIRVMERDLNERIERGEAPPECASIQRWRTPILAMTADVIQATHEECLKSEMDGYVSKPFEGEQLYSEVARFFQNHDQVE.

Topologically, residues 1 to 80 (MDEMSCGGGG…RGWRVVRETW (80 aa)) are cytoplasmic. The helical transmembrane segment at 81–101 (WWVLLLWILAGSLGSFYLFLF) threads the bilayer. Over 102 to 387 (MNAQSLDKRR…CRFEKKPPWP (286 aa)) the chain is Extracellular. Residues 151–352 (TPSAIDQMTF…TNESPISMYG (202 aa)) enclose the CHASE domain. Residues 388 to 408 (WLAITSSFGTLVIALLTGHIF) traverse the membrane as a helical segment. Topologically, residues 409–1023 (QATVHRIAKV…RFFQNHDQVE (615 aa)) are cytoplasmic. In terms of domain architecture, Histidine kinase spans 445-715 (TVSHEIRTPM…TFTFTAVLMR (271 aa)). His448 carries the phosphohistidine; by autocatalysis modification. 2 Response regulatory domains span residues 732-854 (NALV…RRAL) and 880-1016 (QIIV…ARFF). Asp783 carries the post-translational modification 4-aspartylphosphate. The interval 812–831 (LFLLGSSASSPKGGSDTSRE) is disordered. Over residues 817 to 827 (SSASSPKGGSD) the composition is skewed to polar residues. A 4-aspartylphosphate modification is found at Asp930.

Activation probably requires a transfer of a phosphate group between a His in the transmitter domain and an Asp of the receiver domain.

It is found in the cell membrane. The catalysed reaction is ATP + protein L-histidine = ADP + protein N-phospho-L-histidine.. Cytokinin receptor related to bacterial two-component regulators. Functions as a histidine kinase and transmits the stress signal to a downstream MAPK cascade. The protein is Probable histidine kinase 3 of Oryza sativa subsp. indica (Rice).